We begin with the raw amino-acid sequence, 493 residues long: Glutamyl-tRNA(Gln) amidotransferase subunit A (493 aa).

Catalysis depends on charge relay system residues K79 and S159. The Acyl-ester intermediate role is filled by S183.

This sequence belongs to the amidase family. GatA subfamily. Heterotrimer of A, B and C subunits.

It catalyses the reaction L-glutamyl-tRNA(Gln) + L-glutamine + ATP + H2O = L-glutaminyl-tRNA(Gln) + L-glutamate + ADP + phosphate + H(+). In terms of biological role, allows the formation of correctly charged Gln-tRNA(Gln) through the transamidation of misacylated Glu-tRNA(Gln) in organisms which lack glutaminyl-tRNA synthetase. The reaction takes place in the presence of glutamine and ATP through an activated gamma-phospho-Glu-tRNA(Gln). This chain is Glutamyl-tRNA(Gln) amidotransferase subunit A, found in Allorhizobium ampelinum (strain ATCC BAA-846 / DSM 112012 / S4) (Agrobacterium vitis (strain S4)).